Reading from the N-terminus, the 370-residue chain is Actin-related protein 2/3 complex subunit 1A (370 aa).

WD repeat units follow at residues 6–45 (FLLE…WTKA), 50–89 (EHNG…WKPT), 140–179 (PIRS…VDEK), 202–241 (GTGG…QVST), 244–284 (TEFL…TFVS), and 322–365 (LHQN…SSIQ).

This sequence belongs to the WD repeat ARPC1 family. As to quaternary structure, probable component of the Arp2/3 complex in which it may replace ARPC1B.

Its subcellular location is the cytoplasm. It is found in the cytoskeleton. It localises to the nucleus. Functionally, probably functions as a component of the Arp2/3 complex which is involved in regulation of actin polymerization and together with an activating nucleation-promoting factor (NPF) mediates the formation of branched actin networks. In addition to its role in the cytoplasmic cytoskeleton, the Arp2/3 complex also promotes actin polymerization in the nucleus, thereby regulating gene transcription and repair of damaged DNA. The protein is Actin-related protein 2/3 complex subunit 1A (Arpc1a) of Rattus norvegicus (Rat).